A 356-amino-acid polypeptide reads, in one-letter code: Cyclin-A1-4 (356 aa).

The protein belongs to the cyclin family. Cyclin AB subfamily.

The chain is Cyclin-A1-4 (CYCA1-4) from Oryza sativa subsp. japonica (Rice).